A 361-amino-acid chain; its full sequence is Ataxin-3 (361 aa).

M1 is covalently cross-linked (Peptide (Met-Gly) (interchain with G-Cter in ubiquitin)). In terms of domain architecture, Josephin spans 1–180; sequence MESIFHEKQE…DCEADQLLQM (180 aa). C14 acts as the Nucleophile in catalysis. H119 acts as the Proton acceptor in catalysis. The active site involves N134. K200 participates in a covalent cross-link: Glycyl lysine isopeptide (Lys-Gly) (interchain with G-Cter in ubiquitin). A Phosphoserine modification is found at S219. 2 UIM domains span residues 224 to 243 and 244 to 263; these read EDEE…IDME and DEEA…SSRN. The span at 258-278 shows a compositional bias: polar residues; it reads QGSSRNISQDMTQTSGTNLTS. The segment at 258–338 is disordered; that stretch reads QGSSRNISQD…DLGDAMSEED (81 aa). 2 positions are modified to phosphoserine: S265 and S272. A compositionally biased stretch (basic and acidic residues) spans 279-293; sequence EELRKRREAYFEKQQ. Residues 294–305 are compositionally biased toward low complexity; it reads QKQQQQQQQQQQ. The span at 306–325 shows a compositional bias: polar residues; sequence GDLSGQSSHPCERPATSSGA. S328 is subject to Phosphoserine. The region spanning 331–349 is the UIM 3 domain; the sequence is GDAMSEEDMLQAAVTMSLE.

As to quaternary structure, interacts with STUB1/CHIP (when monoubiquitinated). Interacts with DNA repair proteins RAD23A and RAD23B. Interacts with BECN1 (via its poly-Gln domain). Interacts with PRKN, UBR2, VCP and tubulin. Short isoform 1 interacts with CASP7. Monoubiquitinated N-terminally by UBE2W, possibly leading to activate the deubiquitinating enzyme activity. In terms of tissue distribution, ubiquitous.

It localises to the nucleus matrix. Its subcellular location is the nucleus. The protein localises to the lysosome membrane. The enzyme catalyses Thiol-dependent hydrolysis of ester, thioester, amide, peptide and isopeptide bonds formed by the C-terminal Gly of ubiquitin (a 76-residue protein attached to proteins as an intracellular targeting signal).. Functionally, deubiquitinating enzyme involved in protein homeostasis maintenance, transcription, cytoskeleton regulation, myogenesis and degradation of misfolded chaperone substrates. Binds long polyubiquitin chains and trims them, while it has weak or no activity against chains of 4 or less ubiquitins. Involved in degradation of misfolded chaperone substrates via its interaction with STUB1/CHIP: recruited to monoubiquitinated STUB1/CHIP, and restricts the length of ubiquitin chain attached to STUB1/CHIP substrates and preventing further chain extension. Interacts with key regulators of transcription and represses transcription: acts as a histone-binding protein that regulates transcription. Acts as a negative regulator of mTORC1 signaling in response to amino acid deprivation by mediating deubiquitination of RHEB, thereby promoting RHEB inactivation by the TSC-TBC complex. Regulates autophagy via the deubiquitination of 'Lys-402' of BECN1 leading to the stabilization of BECN1. In Homo sapiens (Human), this protein is Ataxin-3.